A 1161-amino-acid polypeptide reads, in one-letter code: DNA-directed RNA polymerase subunit beta (1161 aa).

It belongs to the RNA polymerase beta chain family. In terms of assembly, the RNAP catalytic core consists of 2 alpha, 1 beta, 1 beta' and 1 omega subunit. When a sigma factor is associated with the core the holoenzyme is formed, which can initiate transcription. The RNAP complex including the principal sigma factor HrdB also interacts with RNA-binding protein RbpA.

It catalyses the reaction RNA(n) + a ribonucleoside 5'-triphosphate = RNA(n+1) + diphosphate. Functionally, DNA-dependent RNA polymerase catalyzes the transcription of DNA into RNA using the four ribonucleoside triphosphates as substrates. The sequence is that of DNA-directed RNA polymerase subunit beta from Streptomyces coelicolor (strain ATCC BAA-471 / A3(2) / M145).